Here is a 100-residue protein sequence, read N- to C-terminus: Urease subunit gamma (100 aa).

It belongs to the urease gamma subunit family. As to quaternary structure, heterotrimer of UreA (gamma), UreB (beta) and UreC (alpha) subunits. Three heterotrimers associate to form the active enzyme.

It is found in the cytoplasm. It catalyses the reaction urea + 2 H2O + H(+) = hydrogencarbonate + 2 NH4(+). The protein operates within nitrogen metabolism; urea degradation; CO(2) and NH(3) from urea (urease route): step 1/1. This chain is Urease subunit gamma, found in Citrobacter koseri (strain ATCC BAA-895 / CDC 4225-83 / SGSC4696).